A 115-amino-acid polypeptide reads, in one-letter code: Tyrosine-protein phosphatase 18 (115 aa).

The Tyrosine-protein phosphatase domain occupies 1–115 (WLMIVEQKCR…ETGSDAPMVV (115 aa)). Residue Asp-83 coordinates substrate.

This sequence belongs to the protein-tyrosine phosphatase family.

The enzyme catalyses O-phospho-L-tyrosyl-[protein] + H2O = L-tyrosyl-[protein] + phosphate. The polypeptide is Tyrosine-protein phosphatase 18 (STY-18) (Styela plicata (Wrinkled sea squirt)).